Consider the following 132-residue polypeptide: Sirohydrochlorin cobaltochelatase (132 aa).

The active-site Proton acceptor is the H10. Position 10 (H10) interacts with Co(2+). Residues R46 and 69–74 (ISYGLH) each bind substrate. H74 serves as a coordination point for Co(2+).

It belongs to the CbiX family. CbiXS subfamily. Homotetramer; dimer of dimers.

The catalysed reaction is Co-sirohydrochlorin + 2 H(+) = sirohydrochlorin + Co(2+). It functions in the pathway cofactor biosynthesis; adenosylcobalamin biosynthesis; cob(II)yrinate a,c-diamide from sirohydrochlorin (anaerobic route): step 1/10. Functionally, catalyzes the insertion of Co(2+) into sirohydrochlorin as part of the anaerobic pathway to cobalamin biosynthesis. The polypeptide is Sirohydrochlorin cobaltochelatase (Archaeoglobus fulgidus (strain ATCC 49558 / DSM 4304 / JCM 9628 / NBRC 100126 / VC-16)).